The primary structure comprises 338 residues: Galactinol synthase 2 (338 aa).

Lysine 105 is a catalytic residue. Mn(2+) is bound by residues aspartate 121, aspartate 123, and histidine 258.

It belongs to the glycosyltransferase 8 family. Galactosyltransferase subfamily. It depends on a divalent metal cation as a cofactor.

It is found in the cytoplasm. The enzyme catalyses myo-inositol + UDP-alpha-D-galactose = alpha-D-galactosyl-(1-&gt;3)-1D-myo-inositol + UDP + H(+). Its function is as follows. Galactinol synthase involved in the biosynthesis of raffinose family oligosaccharides (RFOs) that function as osmoprotectants. May promote plant stress tolerance. This Solanum lycopersicum (Tomato) protein is Galactinol synthase 2 (GOLS2).